The sequence spans 338 residues: Ketol-acid reductoisomerase (NADP(+)) (338 aa).

The 181-residue stretch at 1–181 (MRVYYDKDCD…GGGRSGIIET (181 aa)) folds into the KARI N-terminal Rossmann domain. Residues 24 to 27 (YGSQ), R47, S50, S52, and 82 to 85 (DENQ) each bind NADP(+). H107 is an active-site residue. Position 133 (G133) interacts with NADP(+). One can recognise a KARI C-terminal knotted domain in the interval 182–327 (TFKDETETDL…EKLRGMMPWI (146 aa)). D190, E194, E226, and E230 together coordinate Mg(2+). Residue S251 participates in substrate binding.

This sequence belongs to the ketol-acid reductoisomerase family. It depends on Mg(2+) as a cofactor.

The enzyme catalyses (2R)-2,3-dihydroxy-3-methylbutanoate + NADP(+) = (2S)-2-acetolactate + NADPH + H(+). It catalyses the reaction (2R,3R)-2,3-dihydroxy-3-methylpentanoate + NADP(+) = (S)-2-ethyl-2-hydroxy-3-oxobutanoate + NADPH + H(+). It functions in the pathway amino-acid biosynthesis; L-isoleucine biosynthesis; L-isoleucine from 2-oxobutanoate: step 2/4. Its pathway is amino-acid biosynthesis; L-valine biosynthesis; L-valine from pyruvate: step 2/4. Involved in the biosynthesis of branched-chain amino acids (BCAA). Catalyzes an alkyl-migration followed by a ketol-acid reduction of (S)-2-acetolactate (S2AL) to yield (R)-2,3-dihydroxy-isovalerate. In the isomerase reaction, S2AL is rearranged via a Mg-dependent methyl migration to produce 3-hydroxy-3-methyl-2-ketobutyrate (HMKB). In the reductase reaction, this 2-ketoacid undergoes a metal-dependent reduction by NADPH to yield (R)-2,3-dihydroxy-isovalerate. The sequence is that of Ketol-acid reductoisomerase (NADP(+)) from Chromohalobacter salexigens (strain ATCC BAA-138 / DSM 3043 / CIP 106854 / NCIMB 13768 / 1H11).